Consider the following 197-residue polypeptide: Tyrosine-protein phosphatase-like protein OCA2 (197 aa).

Positions 10 to 160 (SPVVSTDVSL…FETNLKIPRN (151 aa)) constitute a Tyrosine-protein phosphatase domain. S181 is subject to Phosphoserine.

The protein belongs to the protein-tyrosine phosphatase family.

It localises to the cytoplasm. Required for normal growth in the presence of linoleic acid hydroperoxide (LoaOOH). The polypeptide is Tyrosine-protein phosphatase-like protein OCA2 (OCA2) (Saccharomyces cerevisiae (strain ATCC 204508 / S288c) (Baker's yeast)).